The primary structure comprises 249 residues: Probable transcriptional regulatory protein OTBS_0251 (249 aa).

The protein belongs to the TACO1 family.

The protein localises to the cytoplasm. This Orientia tsutsugamushi (strain Boryong) (Rickettsia tsutsugamushi) protein is Probable transcriptional regulatory protein OTBS_0251.